A 51-amino-acid polypeptide reads, in one-letter code: DNA-directed RNA polymerase subunit Rpo12 (51 aa).

The Zn(2+) site is built by Cys14, Cys29, and Cys32.

The protein belongs to the archaeal Rpo12/eukaryotic RPC10 RNA polymerase subunit family. As to quaternary structure, part of the RNA polymerase complex. Zn(2+) is required as a cofactor.

The protein resides in the cytoplasm. The catalysed reaction is RNA(n) + a ribonucleoside 5'-triphosphate = RNA(n+1) + diphosphate. DNA-dependent RNA polymerase (RNAP) catalyzes the transcription of DNA into RNA using the four ribonucleoside triphosphates as substrates. This Methanopyrus kandleri (strain AV19 / DSM 6324 / JCM 9639 / NBRC 100938) protein is DNA-directed RNA polymerase subunit Rpo12.